A 536-amino-acid chain; its full sequence is Alpha-1,3-mannosyl-glycoprotein 4-beta-N-acetylglucosaminyltransferase A (536 aa).

The Cytoplasmic segment spans residues 1-6 (MRLRNG). A helical; Signal-anchor for type II membrane protein membrane pass occupies residues 7 to 27 (TVATALVFITTFLSLSWYTAW). Residues 28 to 54 (QNGKEKLMAYQREFHALKERLRIAEHR) adopt a coiled-coil conformation. Residues 28–536 (QNGKEKLMAY…EIHIKRNPAD (509 aa)) lie on the Lumenal side of the membrane. 2 N-linked (GlcNAc...) asparagine glycosylation sites follow: asparagine 77 and asparagine 458.

It belongs to the glycosyltransferase 54 family. The cofactor is a divalent metal cation. N-glycosylated.

It localises to the golgi apparatus membrane. It is found in the secreted. It catalyses the reaction N(4)-{beta-D-GlcNAc-(1-&gt;2)-alpha-D-Man-(1-&gt;3)-[beta-D-GlcNAc-(1-&gt;2)-alpha-D-Man-(1-&gt;6)]-beta-D-Man-(1-&gt;4)-beta-D-GlcNAc-(1-&gt;4)-beta-D-GlcNAc}-L-asparaginyl-[protein] + UDP-N-acetyl-alpha-D-glucosamine = N(4)-{beta-D-GlcNAc-(1-&gt;2)-[beta-D-GlcNAc-(1-&gt;4)]-alpha-D-Man-(1-&gt;3)-[beta-D-GlcNAc-(1-&gt;2)-alpha-D-Man-(1-&gt;6)]-beta-D-Man-(1-&gt;4)-beta-D-GlcNAc-(1-&gt;4)-beta-D-GlcNAc}-L-asparaginyl-[protein] + UDP + H(+). It carries out the reaction an N(4)-{beta-D-GlcNAc-(1-&gt;2)-alpha-D-Man-(1-&gt;3)-[alpha-D-Man-(1-&gt;6)]-beta-D-Man-(1-&gt;4)-beta-D-GlcNAc-(1-&gt;4)-beta-D-GlcNAc}-L-asparaginyl-[protein] + UDP-N-acetyl-alpha-D-glucosamine = an N(4)-{beta-D-GlcNAc-(1-&gt;2)-[beta-D-GlcNAc-(1-&gt;4)]-alpha-D-Man-(1-&gt;3)-[alpha-D-Man-(1-&gt;6)]-beta-D-Man-(1-&gt;4)-beta-D-GlcNAc-(1-&gt;4)-beta-D-GlcNAc}-L-asparaginyl-[protein] + UDP + H(+). The enzyme catalyses an N(4)-{beta-D-GlcNAc-(1-&gt;2)-alpha-D-Man-(1-&gt;3)-[beta-D-GlcNAc-(1-&gt;2)-[beta-D-GlcNAc-(1-&gt;6)]-alpha-D-Man-(1-&gt;6)]-beta-D-Man-(1-&gt;4)-beta-D-GlcNAc-(1-&gt;4)-beta-D-GlcNAc}-L-asparaginyl-[protein] + UDP-N-acetyl-alpha-D-glucosamine = an N(4)-{beta-D-GlcNAc-(1-&gt;2)-[beta-D-GlcNAc-(1-&gt;4)]-alpha-D-Man-(1-&gt;3)-[beta-D-GlcNAc-(1-&gt;2)-[beta-D-GlcNAc-(1-&gt;6)]-alpha-D-Man-(1-&gt;6)]-beta-D-Man-(1-&gt;4)-beta-D-GlcNAc-(1-&gt;4)-beta-D-GlcNAc}-L-asparaginyl-[protein] + UDP + H(+). The catalysed reaction is an N(4)-{beta-D-GlcNAc-(1-&gt;2)-alpha-D-Man-(1-&gt;3)-[beta-D-GlcNAc-(1-&gt;2)-alpha-D-Man-(1-&gt;6)]-beta-D-Man-(1-&gt;4)-beta-D-GlcNAc-(1-&gt;4)-[alpha-L-Fuc-(1-&gt;6)]-beta-D-GlcNAc}-L-asparaginyl-[protein] + UDP-N-acetyl-alpha-D-glucosamine = N(4)-{beta-D-GlcNAc-(1-&gt;2)-[beta-D-GlcNAc-(1-&gt;4)]-alpha-D-Man-(1-&gt;3)-[beta-D-GlcNAc-(1-&gt;2)-alpha-D-Man-(1-&gt;6)]-beta-D-Man-(1-&gt;4)-beta-D-GlcNAc-(1-&gt;4)-[alpha-L-Fuc-(1-&gt;6)]-beta-D-GlcNAc}-asparaginyl-[protein] + UDP + H(+). It catalyses the reaction an N(4)-{beta-D-GlcNAc-(1-&gt;2)-alpha-D-Man-(1-&gt;3)-[beta-D-Gal-(1-&gt;4)-beta-D-GlcNAc-(1-&gt;2)-alpha-D-Man-(1-&gt;6)]-beta-D-Man-(1-&gt;4)-beta-D-GlcNAc-(1-&gt;4)-beta-D-GlcNAc}-L-asparaginyl-[protein] + UDP-N-acetyl-alpha-D-glucosamine = an N(4)-{beta-D-GlcNAc-(1-&gt;2)-[beta-D-GlcNAc-(1-&gt;4)]-alpha-D-Man-(1-&gt;3)-[beta-D-Gal-(1-&gt;4)-beta-D-GlcNAc-(1-&gt;2)-alpha-D-Man-(1-&gt;6)]-beta-D-Man-(1-&gt;4)-beta-D-GlcNAc-(1-&gt;4)-beta-D-GlcNAc}-L-asparaginyl-[protein] + UDP + H(+). It carries out the reaction N(4)-{beta-D-GlcNAc-(1-&gt;2)-alpha-D-Man-(1-&gt;3)-[alpha-D-Man-(1-&gt;3)-{alpha-D-Man-(1-&gt;6)}-alpha-D-Man-(1-&gt;6)]-beta-D-Man-(1-&gt;4)-beta-D-GlcNAc-(1-&gt;4)-beta-D-GlcNAc}-asparaginyl-[protein] + UDP-N-acetyl-alpha-D-glucosamine = N(4)-{beta-D-GlcNAc-(1-&gt;2)-[beta-D-GlcNAc-(1-&gt;4)]-alpha-D-Man-(1-&gt;3)-[alpha-D-Man-(1-&gt;3)-{alpha-D-Man-(1-&gt;6)}-alpha-D-Man-(1-&gt;6)]-beta-D-Man-(1-&gt;4)-beta-D-GlcNAc-(1-&gt;4)-beta-D-GlcNAc}-asparaginyl-[protein] + UDP + H(+). The enzyme catalyses N(4)-{beta-D-GlcNAc-(1-&gt;2)-alpha-D-Man-(1-&gt;3)-beta-D-Man-(1-&gt;4)-beta-D-GlcNAc-(1-&gt;4)-beta-D-GlcNAc}-asparaginyl-[protein] + UDP-N-acetyl-alpha-D-glucosamine = N(4)-{beta-D-GlcNAc-(1-&gt;2)-[beta-D-GlcNAc-(1-&gt;4)]-alpha-D-Man-(1-&gt;3)-beta-D-Man-(1-&gt;4)-beta-D-GlcNAc-(1-&gt;4)-beta-D-GlcNAc}-asparaginyl-[protein] + UDP + H(+). The protein operates within protein modification; protein glycosylation. With respect to regulation, inhibited by UDP. In terms of biological role, glycosyltransferase that catalyze the transfer of GlcNAc from UDP-GlcNAc to the GlcNAcbeta1-2Manalpha1-3 arm of the core structure of N-linked glycans through a beta1-4 linkage and participates in the production of tri- and tetra-antennary N-linked sugar chains. Involved in glucose transport by mediating SLC2A2/GLUT2 glycosylation, thereby controlling cell-surface expression of SLC2A2 in pancreatic beta cells. The chain is Alpha-1,3-mannosyl-glycoprotein 4-beta-N-acetylglucosaminyltransferase A from Xenopus tropicalis (Western clawed frog).